The sequence spans 646 residues: Lamin-1 (646 aa).

Residues 1–85 (MAEKAGEAGV…GSRATSPTSF (85 aa)) form a head region. The tract at residues 1 to 94 (MAEKAGEAGV…FSRAQEKEEL (94 aa)) is disordered. Composition is skewed to polar residues over residues 48–67 (ATPSSQQSQKSVRTESSMSL) and 75–87 (QGSRATSPTSFSR). A coil 1A region spans residues 86–126 (SRAQEKEELQNLNDRLAKILNKLNDSEEENRTLKIRLTTVQ). In terms of domain architecture, IF rod spans 90–446 (EKEELQNLND…KLLSDEEIRL (357 aa)). The segment at 127–137 (QETSADLNDQI) is linker 1. Positions 138-281 (GKYRDELERA…SKLQRQSLSV (144 aa)) are coil 1B. A compositionally biased stretch (polar residues) spans 281-301 (VTTVDHHSAQSTSRRSGSDFS). The segment at 281–304 (VTTVDHHSAQSTSRRSGSDFSASV) is disordered. Residues 282 to 299 (TTVDHHSAQSTSRRSGSD) are linker 2. Positions 300-439 (FSASVEDMRS…TELEMYNKLL (140 aa)) are coil 2. Residues 440–646 (SDEEIRLGIT…GKGILGFFGL (207 aa)) are tail. Residues 457-471 (VRHGAKKRKLTETFY) carry the Nuclear localization signal motif. A compositionally biased stretch (low complexity) spans 476-487 (GSRSSAGSRSAG). The interval 476-513 (GSRSSAGSRSAGHNSTPVTKSQVTRTTVKTSENKSKAS) is disordered. Residues 488–505 (HNSTPVTKSQVTRTTVKT) show a composition bias toward polar residues. Residues 504–618 (KTSENKSKAS…NQMATYEVSA (115 aa)) enclose the LTD domain.

The protein belongs to the intermediate filament family.

The protein localises to the nucleus. Functionally, intermediate filament (IF) protein, component of the nuclear lamina, a fibrous layer on the nucleoplasmic side of the inner nuclear membrane, which is thought to provide a framework for the nuclear envelope. This is Lamin-1 from Hypsibius exemplaris (Freshwater tardigrade).